The following is a 368-amino-acid chain: N-acetylneuraminate epimerase (368 aa).

Residues 1 to 19 (MNKTITALAIMMASFAANA) form the signal peptide. Kelch repeat units follow at residues 40-84 (TVYI…AFID), 86-137 (NLYV…FVHN), 139-173 (KAYV…KINA), 174-219 (YYFD…VNKG), 222-265 (TWLI…VAGG), 287-336 (ENYQ…PWNN), and 338-367 (LLII…VTVQ). Glu228 (proton acceptor) is an active-site residue.

The protein belongs to the NanM family. In terms of assembly, homodimer.

The protein localises to the periplasm. The enzyme catalyses N-acetyl-alpha-neuraminate = N-acetyl-beta-neuraminate. Its function is as follows. Converts alpha-N-acetylneuranimic acid (Neu5Ac) to the beta-anomer, accelerating the equilibrium between the alpha- and beta-anomers. Probably facilitates sialidase-negative bacteria to compete successfully for limited amounts of extracellular Neu5Ac, which is likely taken up in the beta-anomer. In addition, the rapid removal of sialic acid from solution might be advantageous to the bacterium to damp down host responses. The sequence is that of N-acetylneuraminate epimerase from Shigella boydii serotype 4 (strain Sb227).